A 339-amino-acid polypeptide reads, in one-letter code: UDP-N-acetylglucosamine--N-acetylmuramyl-(pentapeptide) pyrophosphoryl-undecaprenol N-acetylglucosamine transferase (339 aa).

UDP-N-acetyl-alpha-D-glucosamine contacts are provided by residues 11–13 (TGG), asparagine 127, arginine 170, serine 188, isoleucine 235, and glutamine 280.

The protein belongs to the glycosyltransferase 28 family. MurG subfamily.

It is found in the cell inner membrane. It catalyses the reaction di-trans,octa-cis-undecaprenyl diphospho-N-acetyl-alpha-D-muramoyl-L-alanyl-D-glutamyl-meso-2,6-diaminopimeloyl-D-alanyl-D-alanine + UDP-N-acetyl-alpha-D-glucosamine = di-trans,octa-cis-undecaprenyl diphospho-[N-acetyl-alpha-D-glucosaminyl-(1-&gt;4)]-N-acetyl-alpha-D-muramoyl-L-alanyl-D-glutamyl-meso-2,6-diaminopimeloyl-D-alanyl-D-alanine + UDP + H(+). It participates in cell wall biogenesis; peptidoglycan biosynthesis. In terms of biological role, cell wall formation. Catalyzes the transfer of a GlcNAc subunit on undecaprenyl-pyrophosphoryl-MurNAc-pentapeptide (lipid intermediate I) to form undecaprenyl-pyrophosphoryl-MurNAc-(pentapeptide)GlcNAc (lipid intermediate II). The sequence is that of UDP-N-acetylglucosamine--N-acetylmuramyl-(pentapeptide) pyrophosphoryl-undecaprenol N-acetylglucosamine transferase from Thermotoga sp. (strain RQ2).